Here is a 92-residue protein sequence, read N- to C-terminus: Small ribosomal subunit protein uS19 (92 aa).

Belongs to the universal ribosomal protein uS19 family.

In terms of biological role, protein S19 forms a complex with S13 that binds strongly to the 16S ribosomal RNA. This Shewanella putrefaciens (strain CN-32 / ATCC BAA-453) protein is Small ribosomal subunit protein uS19.